The chain runs to 590 residues: Fucose-1-phosphate guanylyltransferase (590 aa).

In terms of tissue distribution, expressed at highest levels in brain, moderately in testis, ovary and kidney, and weakly in liver, spleen, heart and lung.

Its subcellular location is the cytoplasm. The enzyme catalyses beta-L-fucose 1-phosphate + GTP + H(+) = GDP-beta-L-fucose + diphosphate. Its function is as follows. Catalyzes the formation of GDP-L-fucose from GTP and L-fucose-1-phosphate. Functions as a salvage pathway to reutilize L-fucose arising from the turnover of glycoproteins and glycolipids. The sequence is that of Fucose-1-phosphate guanylyltransferase from Mus musculus (Mouse).